We begin with the raw amino-acid sequence, 296 residues long: 4-diphosphocytidyl-2-C-methyl-D-erythritol kinase (296 aa).

Lysine 14 is an active-site residue. Residue 97-107 participates in ATP binding; it reads PMGAGMGGGSS. The active site involves aspartate 139.

This sequence belongs to the GHMP kinase family. IspE subfamily.

The enzyme catalyses 4-CDP-2-C-methyl-D-erythritol + ATP = 4-CDP-2-C-methyl-D-erythritol 2-phosphate + ADP + H(+). It functions in the pathway isoprenoid biosynthesis; isopentenyl diphosphate biosynthesis via DXP pathway; isopentenyl diphosphate from 1-deoxy-D-xylulose 5-phosphate: step 3/6. Catalyzes the phosphorylation of the position 2 hydroxy group of 4-diphosphocytidyl-2C-methyl-D-erythritol. This is 4-diphosphocytidyl-2-C-methyl-D-erythritol kinase from Polynucleobacter necessarius subsp. necessarius (strain STIR1).